We begin with the raw amino-acid sequence, 589 residues long: Probable ATP-dependent RNA helicase DDX59 (589 aa).

2 disordered regions span residues 1-36 and 48-98; these read MFVP…QLEG and KEAV…SKTQ. Positions 12-27 are enriched in basic and acidic residues; the sequence is NSNDDLKSCEAKKSKP. K26 is covalently cross-linked (Glycyl lysine isopeptide (Lys-Gly) (interchain with G-Cter in SUMO2)). Residue S64 is modified to Phosphoserine. Residues 80-91 show a composition bias toward basic and acidic residues; the sequence is GVKDSHPSEEPV. An HIT-type zinc finger spans residues 104–133; that stretch reads GEPVCVVCGRYGEYICDKTDEDVCSLECKA. A phosphoserine mark is found at S156 and S160. The Q motif motif lies at 203-231; that stretch reads IDFEHCGFPETLNQNLKKSGYEVPTPIQM. Residues 234 to 375 form the Helicase ATP-binding domain; the sequence is IPVGLLGRDI…DQLLHNPVRI (142 aa). ATP is bound at residue 247–254; the sequence is ADTGSGKT. Positions 323–326 match the DEAD box motif; the sequence is VKAD. The 151-residue stretch at 399 to 549 folds into the Helicase C-terminal domain; it reads KKKKLFEILN…ILPPQLLNSP (151 aa).

It belongs to the DEAD box helicase family. DDX59 subfamily. In terms of assembly, interacts (via HIT-type zinc finger) with the RUVBL1/RUVBL2 complex in the presence of ADP.

It localises to the cytoplasm. The protein resides in the nucleus. It catalyses the reaction ATP + H2O = ADP + phosphate + H(+). This chain is Probable ATP-dependent RNA helicase DDX59 (Ddx59), found in Rattus norvegicus (Rat).